Consider the following 165-residue polypeptide: MRVALYPGTFDPITLGHVDIIRRAAALVDKLVIGVAINRDKGPLFTLEERVAMIEAECAALSAETGTEIVAHPFENLLIDCARDVGAQIIVRGLRAVADFEYEFQMVGMNRALDDSVETVFLMADARRQAIASKLVKEIARLGGDVSKFVPPRVNDALKERLGRA.

Residue Thr9 coordinates substrate. ATP is bound by residues 9 to 10 (TF) and His17. Substrate-binding residues include Lys41, Leu78, and Arg92. Residues 93–95 (GLR), Glu103, and 128–134 (RQAIASK) contribute to the ATP site.

It belongs to the bacterial CoaD family. Homohexamer. Mg(2+) is required as a cofactor.

The protein localises to the cytoplasm. It carries out the reaction (R)-4'-phosphopantetheine + ATP + H(+) = 3'-dephospho-CoA + diphosphate. It participates in cofactor biosynthesis; coenzyme A biosynthesis; CoA from (R)-pantothenate: step 4/5. Functionally, reversibly transfers an adenylyl group from ATP to 4'-phosphopantetheine, yielding dephospho-CoA (dPCoA) and pyrophosphate. This Ruegeria pomeroyi (strain ATCC 700808 / DSM 15171 / DSS-3) (Silicibacter pomeroyi) protein is Phosphopantetheine adenylyltransferase.